A 435-amino-acid chain; its full sequence is Serine--tRNA ligase (435 aa).

A disordered region spans residues 48–68; that stretch reads MKAQRNEASKKIGEAKRNGES. Residues 49 to 68 are compositionally biased toward basic and acidic residues; sequence KAQRNEASKKIGEAKRNGES. An L-serine-binding site is contributed by 230–232; that stretch reads TAE. 261–263 is a binding site for ATP; that stretch reads RSE. Glutamate 284 is a binding site for L-serine. 348 to 351 lines the ATP pocket; sequence EVSS. An L-serine-binding site is contributed by serine 383.

Belongs to the class-II aminoacyl-tRNA synthetase family. Type-1 seryl-tRNA synthetase subfamily. As to quaternary structure, homodimer. The tRNA molecule binds across the dimer.

Its subcellular location is the cytoplasm. It carries out the reaction tRNA(Ser) + L-serine + ATP = L-seryl-tRNA(Ser) + AMP + diphosphate + H(+). It catalyses the reaction tRNA(Sec) + L-serine + ATP = L-seryl-tRNA(Sec) + AMP + diphosphate + H(+). It participates in aminoacyl-tRNA biosynthesis; selenocysteinyl-tRNA(Sec) biosynthesis; L-seryl-tRNA(Sec) from L-serine and tRNA(Sec): step 1/1. In terms of biological role, catalyzes the attachment of serine to tRNA(Ser). Is also able to aminoacylate tRNA(Sec) with serine, to form the misacylated tRNA L-seryl-tRNA(Sec), which will be further converted into selenocysteinyl-tRNA(Sec). This Limosilactobacillus reuteri (strain DSM 20016) (Lactobacillus reuteri) protein is Serine--tRNA ligase.